The following is a 559-amino-acid chain: uncharacterized protein (559 aa).

Positions 1–10 (MSGRRGDHPG) are enriched in basic and acidic residues. The segment at 1–76 (MSGRRGDHPG…ERSRVPPRTT (76 aa)) is disordered. The next 11 helical transmembrane spans lie at 128 to 148 (FAVDSAMAVALANTLFFAAAS), 155 to 175 (VALYLLITIAPFAVIAPLIGP), 186 to 206 (VALALSFGLRTALAVVLIMNY), 208 to 228 (GATGSFPSWVLYPCALAMMVF), 259 to 279 (VFGLLGGTIAGGAIAAGVEFV), 283 to 303 (LFQLPGALFVVVAITIAGASL), 358 to 378 (LWGNCTIKVMVGFLFLYPAFV), 387 to 407 (WVQLGMLGLIGAAAAVGNFAG), 428 to 448 (VLVTVLAIAAAVAGSLAATAI), 490 to 510 (LAWVLGGAVGVLVYTELWVGF), and 515 to 535 (ALLILGLAQTIVSFRGDSLIP).

To M.leprae ML2143.

It is found in the cell membrane. This is an uncharacterized protein from Mycobacterium tuberculosis (strain CDC 1551 / Oshkosh).